A 103-amino-acid chain; its full sequence is Large ribosomal subunit protein uL24 (103 aa).

The protein belongs to the universal ribosomal protein uL24 family. In terms of assembly, part of the 50S ribosomal subunit.

One of two assembly initiator proteins, it binds directly to the 5'-end of the 23S rRNA, where it nucleates assembly of the 50S subunit. In terms of biological role, one of the proteins that surrounds the polypeptide exit tunnel on the outside of the subunit. The sequence is that of Large ribosomal subunit protein uL24 from Dehalococcoides mccartyi (strain ATCC BAA-2100 / JCM 16839 / KCTC 5957 / BAV1).